We begin with the raw amino-acid sequence, 337 residues long: Anthranilate phosphoribosyltransferase (337 aa).

5-phospho-alpha-D-ribose 1-diphosphate-binding positions include Gly-80, 83–84 (GD), Thr-88, 90–93 (NIST), 108–116 (KHGNRAVSS), and Ser-120. Gly-80 provides a ligand contact to anthranilate. Mg(2+) is bound at residue Ser-92. Asn-111 serves as a coordination point for anthranilate. Residue Arg-166 coordinates anthranilate. Positions 224 and 225 each coordinate Mg(2+).

It belongs to the anthranilate phosphoribosyltransferase family. As to quaternary structure, homodimer. It depends on Mg(2+) as a cofactor.

The enzyme catalyses N-(5-phospho-beta-D-ribosyl)anthranilate + diphosphate = 5-phospho-alpha-D-ribose 1-diphosphate + anthranilate. The protein operates within amino-acid biosynthesis; L-tryptophan biosynthesis; L-tryptophan from chorismate: step 2/5. Functionally, catalyzes the transfer of the phosphoribosyl group of 5-phosphorylribose-1-pyrophosphate (PRPP) to anthranilate to yield N-(5'-phosphoribosyl)-anthranilate (PRA). In Anaeromyxobacter sp. (strain K), this protein is Anthranilate phosphoribosyltransferase.